The primary structure comprises 260 residues: MVTFYGKTFASRLLIGSALYPSPAIMQGAIRAAGSNIVTVSLRRESAGGKTGDAFWNLIRELDVAVLPNTAGCRSVREAVTTAKLARELFGTSWIKLEVIADNDTLQPDVVGLVEAAAILIKDGFEVFPYCTEDLSVASRLVDAGCKVVMPWAAPIGSARGITNRDALKLLRDRLPDITLVVDAGIGAPSHAAQALELGYDAVLLNTAIAKAADPVAMANAFRLGVEAGRTAFEAGLMNARDFASPSTPVVGTPFWHAVS.

Lys-96 serves as the catalytic Schiff-base intermediate with DXP. 1-deoxy-D-xylulose 5-phosphate is bound by residues Gly-157, 184–185 (AG), and 206–207 (NT).

The protein belongs to the ThiG family. As to quaternary structure, homotetramer. Forms heterodimers with either ThiH or ThiS.

The protein localises to the cytoplasm. It carries out the reaction [ThiS sulfur-carrier protein]-C-terminal-Gly-aminoethanethioate + 2-iminoacetate + 1-deoxy-D-xylulose 5-phosphate = [ThiS sulfur-carrier protein]-C-terminal Gly-Gly + 2-[(2R,5Z)-2-carboxy-4-methylthiazol-5(2H)-ylidene]ethyl phosphate + 2 H2O + H(+). The protein operates within cofactor biosynthesis; thiamine diphosphate biosynthesis. Functionally, catalyzes the rearrangement of 1-deoxy-D-xylulose 5-phosphate (DXP) to produce the thiazole phosphate moiety of thiamine. Sulfur is provided by the thiocarboxylate moiety of the carrier protein ThiS. In vitro, sulfur can be provided by H(2)S. The chain is Thiazole synthase from Bradyrhizobium diazoefficiens (strain JCM 10833 / BCRC 13528 / IAM 13628 / NBRC 14792 / USDA 110).